We begin with the raw amino-acid sequence, 320 residues long: dTDP-glucose 4,6-dehydratase (320 aa).

Residues 11-12 (FI), 38-41 (DKLG), 64-65 (DI), 84-88 (FAAET), and Ser-103 contribute to the NAD(+) site. Thr-88 contacts substrate. Residue Thr-128 coordinates substrate. Residue Asp-129 is the Proton donor of the active site. Active-site proton acceptor residues include Glu-130 and Tyr-152. Residue 152 to 156 (YAASK) participates in NAD(+) binding. A substrate-binding site is contributed by Asn-181. Asn-182 contacts NAD(+). Residues 191–192 (KM), 207–209 (PVY), Arg-216, Asn-251, and 274–278 (DRKGH) contribute to the substrate site.

This sequence belongs to the NAD(P)-dependent epimerase/dehydratase family. dTDP-glucose dehydratase subfamily. As to quaternary structure, homodimer. It depends on NAD(+) as a cofactor.

It carries out the reaction dTDP-alpha-D-glucose = dTDP-4-dehydro-6-deoxy-alpha-D-glucose + H2O. Its function is as follows. Probably involved in the biosynthesis of the acarviose moiety of the alpha-glucosidase inhibitor acarbose. Catalyzes the dehydration of dTDP-D-glucose to form dTDP-6-deoxy-D-xylo-4-hexulose via a three-step process involving oxidation, dehydration and reduction. In Actinoplanes sp. (strain ATCC 31044 / CBS 674.73 / SE50/110), this protein is dTDP-glucose 4,6-dehydratase.